Reading from the N-terminus, the 327-residue chain is GTPase Obg (327 aa).

The Obg domain maps to 1 to 159 (MQFIDQANII…WEVQLELKLL (159 aa)). An OBG-type G domain is found at 160–327 (AEVGIIGLPN…SLLSEVWKRI (168 aa)). ATP-binding positions include 166-173 (GLPNAGKS), 191-195 (FTTLI), 213-216 (DIPG), 280-283 (NKME), and 309-311 (SSS). The Mg(2+) site is built by Ser-173 and Thr-193.

This sequence belongs to the TRAFAC class OBG-HflX-like GTPase superfamily. OBG GTPase family. Monomer. Requires Mg(2+) as cofactor.

The protein resides in the cytoplasm. In terms of biological role, an essential GTPase which binds GTP, GDP and possibly (p)ppGpp with moderate affinity, with high nucleotide exchange rates and a fairly low GTP hydrolysis rate. Plays a role in control of the cell cycle, stress response, ribosome biogenesis and in those bacteria that undergo differentiation, in morphogenesis control. The sequence is that of GTPase Obg from Prochlorococcus marinus (strain MIT 9301).